Here is a 105-residue protein sequence, read N- to C-terminus: MSDLTRLASFARVGGRLFRSGRARTAGDGGVRHAGGGVHIEPRYRQFPQLTRSQVFQSEFFSGLMWFWILWRFWHDSEEVLGHFPYPDPSQWTDEELGIPPDDED.

The N-terminal 33 residues, 1-33, are a transit peptide targeting the mitochondrion; the sequence is MSDLTRLASFARVGGRLFRSGRARTAGDGGVRH. Residues 85–105 form a disordered region; the sequence is PYPDPSQWTDEELGIPPDDED. Residues 93-105 are compositionally biased toward acidic residues; sequence TDEELGIPPDDED.

It belongs to the complex I NDUFB2 subunit family. As to quaternary structure, complex I is composed of 45 different subunits.

The protein localises to the mitochondrion inner membrane. Functionally, accessory subunit of the mitochondrial membrane respiratory chain NADH dehydrogenase (Complex I), that is believed not to be involved in catalysis. Complex I functions in the transfer of electrons from NADH to the respiratory chain. The immediate electron acceptor for the enzyme is believed to be ubiquinone. The sequence is that of NADH dehydrogenase [ubiquinone] 1 beta subcomplex subunit 2, mitochondrial (NDUFB2) from Pan troglodytes (Chimpanzee).